Here is a 250-residue protein sequence, read N- to C-terminus: MGQKVNPNGFRLGIIRDWTSRWYDDSPVIAEKIKQDHVIRNYVQARLKREKAGIARIVIERTTKHIKINIYAARPGAVVGRKGEEINNLSQELSRITGKEVKIDVVEVIKPETEAQLIGENIAYQLENRVSFRRAMKQAIQQAMRAGAEGIRIRCAGRLGGAEIARAEQYKEGKIPLHTIRANVDYASVTAHTIAGTIGIKVWVYKGEVLVQRIDAIEEDELKRINERRGDSKSRPRDPRNKRRRRTKRS.

Residues 39–109 (IRNYVQARLK…EVKIDVVEVI (71 aa)) form the KH type-2 domain. The span at 225 to 239 (INERRGDSKSRPRDP) shows a compositional bias: basic and acidic residues. The interval 225–250 (INERRGDSKSRPRDPRNKRRRRTKRS) is disordered. The segment covering 240-250 (RNKRRRRTKRS) has biased composition (basic residues).

Belongs to the universal ribosomal protein uS3 family. As to quaternary structure, part of the 30S ribosomal subunit. Forms a tight complex with proteins S10 and S14.

Functionally, binds the lower part of the 30S subunit head. Binds mRNA in the 70S ribosome, positioning it for translation. The chain is Small ribosomal subunit protein uS3 from Chlorobium phaeobacteroides (strain DSM 266 / SMG 266 / 2430).